A 235-amino-acid polypeptide reads, in one-letter code: Ubiquinone/menaquinone biosynthesis C-methyltransferase UbiE (235 aa).

Residues T59, D84, and S123 each contribute to the S-adenosyl-L-methionine site.

Belongs to the class I-like SAM-binding methyltransferase superfamily. MenG/UbiE family.

It catalyses the reaction a 2-demethylmenaquinol + S-adenosyl-L-methionine = a menaquinol + S-adenosyl-L-homocysteine + H(+). The enzyme catalyses a 2-methoxy-6-(all-trans-polyprenyl)benzene-1,4-diol + S-adenosyl-L-methionine = a 5-methoxy-2-methyl-3-(all-trans-polyprenyl)benzene-1,4-diol + S-adenosyl-L-homocysteine + H(+). It functions in the pathway quinol/quinone metabolism; menaquinone biosynthesis; menaquinol from 1,4-dihydroxy-2-naphthoate: step 2/2. Its pathway is cofactor biosynthesis; ubiquinone biosynthesis. Its function is as follows. Methyltransferase required for the conversion of demethylmenaquinol (DMKH2) to menaquinol (MKH2) and the conversion of 2-polyprenyl-6-methoxy-1,4-benzoquinol (DDMQH2) to 2-polyprenyl-3-methyl-6-methoxy-1,4-benzoquinol (DMQH2). The protein is Ubiquinone/menaquinone biosynthesis C-methyltransferase UbiE of Campylobacter jejuni subsp. jejuni serotype O:23/36 (strain 81-176).